A 344-amino-acid chain; its full sequence is Anthranilate phosphoribosyltransferase (344 aa).

Residues Gly-80, 83–84 (GD), Thr-88, 90–93 (NIST), 108–116 (KHGNRSISS), and Ser-120 contribute to the 5-phospho-alpha-D-ribose 1-diphosphate site. An anthranilate-binding site is contributed by Gly-80. Ser-92 lines the Mg(2+) pocket. An anthranilate-binding site is contributed by Asn-111. Arg-166 serves as a coordination point for anthranilate. Residues Asp-229 and Glu-230 each coordinate Mg(2+).

Belongs to the anthranilate phosphoribosyltransferase family. In terms of assembly, homodimer. Mg(2+) is required as a cofactor.

The enzyme catalyses N-(5-phospho-beta-D-ribosyl)anthranilate + diphosphate = 5-phospho-alpha-D-ribose 1-diphosphate + anthranilate. The protein operates within amino-acid biosynthesis; L-tryptophan biosynthesis; L-tryptophan from chorismate: step 2/5. In terms of biological role, catalyzes the transfer of the phosphoribosyl group of 5-phosphorylribose-1-pyrophosphate (PRPP) to anthranilate to yield N-(5'-phosphoribosyl)-anthranilate (PRA). This is Anthranilate phosphoribosyltransferase from Chloroherpeton thalassium (strain ATCC 35110 / GB-78).